A 761-amino-acid polypeptide reads, in one-letter code: DNA topoisomerase 1 (761 aa).

Residues 6–143 (TALIICEKPS…KRMRFSSLTK (138 aa)) enclose the Toprim domain. Glutamate 12 and aspartate 111 together coordinate Mg(2+). A Topo IA-type catalytic domain is found at 157–569 (DYGLVDAGES…EAEKRLRKIL (413 aa)). The segment at 196-201 (SVGRVQ) is interaction with DNA. Tyrosine 315 (O-(5'-phospho-DNA)-tyrosine intermediate) is an active-site residue. C4-type zinc fingers lie at residues 600 to 626 (CPKCGGDLILIRHKKGRFVGCSNYPEC), 680 to 706 (CPKCGAKLILKKGVYGAFYGCSNYPKC), and 721 to 747 (CPKCGGDLVVREGKFGKFVGCSNYPKC).

This sequence belongs to the type IA topoisomerase family. As to quaternary structure, monomer. It depends on Mg(2+) as a cofactor.

The catalysed reaction is ATP-independent breakage of single-stranded DNA, followed by passage and rejoining.. Releases the supercoiling and torsional tension of DNA, which is introduced during the DNA replication and transcription, by transiently cleaving and rejoining one strand of the DNA duplex. Introduces a single-strand break via transesterification at a target site in duplex DNA. The scissile phosphodiester is attacked by the catalytic tyrosine of the enzyme, resulting in the formation of a DNA-(5'-phosphotyrosyl)-enzyme intermediate and the expulsion of a 3'-OH DNA strand. The free DNA strand then undergoes passage around the unbroken strand, thus removing DNA supercoils. Finally, in the religation step, the DNA 3'-OH attacks the covalent intermediate to expel the active-site tyrosine and restore the DNA phosphodiester backbone. The chain is DNA topoisomerase 1 from Methanocaldococcus jannaschii (strain ATCC 43067 / DSM 2661 / JAL-1 / JCM 10045 / NBRC 100440) (Methanococcus jannaschii).